A 483-amino-acid polypeptide reads, in one-letter code: Putative (R)-citramalate synthase CimA (483 aa).

In terms of domain architecture, Pyruvate carboxyltransferase spans M1 to Y245.

This sequence belongs to the alpha-IPM synthase/homocitrate synthase family. As to quaternary structure, homodimer.

It catalyses the reaction pyruvate + acetyl-CoA + H2O = (3R)-citramalate + CoA + H(+). It participates in amino-acid biosynthesis; L-isoleucine biosynthesis; 2-oxobutanoate from pyruvate: step 1/3. Its function is as follows. Catalyzes the condensation of pyruvate and acetyl-coenzyme A to form (R)-citramalate. In Methanosarcina mazei (strain ATCC BAA-159 / DSM 3647 / Goe1 / Go1 / JCM 11833 / OCM 88) (Methanosarcina frisia), this protein is Putative (R)-citramalate synthase CimA.